A 561-amino-acid chain; its full sequence is Phosphoinositide phospholipase C 1 (561 aa).

The EF-hand domain occupies glutamate 21 to glutamate 54. The 145-residue stretch at glutamine 105 to lysine 249 folds into the PI-PLC X-box domain. Residues histidine 120 and histidine 166 contribute to the active site. Polar residues predominate over residues glutamine 256–aspartate 266. The tract at residues glutamine 256–aspartate 285 is disordered. The span at glutamate 267–aspartate 276 shows a compositional bias: basic and acidic residues. One can recognise a PI-PLC Y-box domain in the interval arginine 294–leucine 410. Residues proline 414–aspartate 541 enclose the C2 domain. The Ca(2+) site is built by aspartate 452, aspartate 458, aspartate 510, aspartate 512, and aspartate 518.

Ca(2+) is required as a cofactor. As to expression, expressed in stems, leaves, roots, flowers and siliques. Predominant in the vascular tissues of roots and leaves.

The protein localises to the cell membrane. It catalyses the reaction a 1,2-diacyl-sn-glycero-3-phospho-(1D-myo-inositol-4,5-bisphosphate) + H2O = 1D-myo-inositol 1,4,5-trisphosphate + a 1,2-diacyl-sn-glycerol + H(+). Its function is as follows. The production of the second messenger molecules diacylglycerol (DAG) and inositol 1,4,5-trisphosphate (IP3) is mediated by activated phosphatidylinositol-specific phospholipase C enzymes. Required for secondary responses to abscisic acid signals. The polypeptide is Phosphoinositide phospholipase C 1 (PLC1) (Arabidopsis thaliana (Mouse-ear cress)).